The chain runs to 131 residues: Glycine cleavage system H protein (131 aa).

One can recognise a Lipoyl-binding domain in the interval 24–106; the sequence is RVTVGISDHA…YGEGWIFVVE (83 aa). Lys-65 is modified (N6-lipoyllysine).

The protein belongs to the GcvH family. As to quaternary structure, the glycine cleavage system is composed of four proteins: P, T, L and H. (R)-lipoate is required as a cofactor.

The glycine cleavage system catalyzes the degradation of glycine. The H protein shuttles the methylamine group of glycine from the P protein to the T protein. This is Glycine cleavage system H protein from Xanthomonas euvesicatoria pv. vesicatoria (strain 85-10) (Xanthomonas campestris pv. vesicatoria).